The sequence spans 561 residues: Dihydroxy-acid dehydratase (561 aa).

Cys-50 lines the [2Fe-2S] cluster pocket. Asp-82 serves as a coordination point for Mg(2+). Cys-123 provides a ligand contact to [2Fe-2S] cluster. The Mg(2+) site is built by Asp-124 and Lys-125. N6-carboxylysine is present on Lys-125. Cys-195 contacts [2Fe-2S] cluster. Position 447 (Glu-447) interacts with Mg(2+). The active-site Proton acceptor is the Ser-473.

The protein belongs to the IlvD/Edd family. In terms of assembly, homodimer. The cofactor is [2Fe-2S] cluster. Mg(2+) serves as cofactor.

It carries out the reaction (2R)-2,3-dihydroxy-3-methylbutanoate = 3-methyl-2-oxobutanoate + H2O. It catalyses the reaction (2R,3R)-2,3-dihydroxy-3-methylpentanoate = (S)-3-methyl-2-oxopentanoate + H2O. It participates in amino-acid biosynthesis; L-isoleucine biosynthesis; L-isoleucine from 2-oxobutanoate: step 3/4. It functions in the pathway amino-acid biosynthesis; L-valine biosynthesis; L-valine from pyruvate: step 3/4. Functionally, functions in the biosynthesis of branched-chain amino acids. Catalyzes the dehydration of (2R,3R)-2,3-dihydroxy-3-methylpentanoate (2,3-dihydroxy-3-methylvalerate) into 2-oxo-3-methylpentanoate (2-oxo-3-methylvalerate) and of (2R)-2,3-dihydroxy-3-methylbutanoate (2,3-dihydroxyisovalerate) into 2-oxo-3-methylbutanoate (2-oxoisovalerate), the penultimate precursor to L-isoleucine and L-valine, respectively. The sequence is that of Dihydroxy-acid dehydratase from Rippkaea orientalis (strain PCC 8801 / RF-1) (Cyanothece sp. (strain PCC 8801)).